Consider the following 225-residue polypeptide: Phosphoenolpyruvate guanylyltransferase (225 aa).

Phosphoenolpyruvate contacts are provided by Thr-150, Gly-166, and Ser-169. Positions 167-186 (PESARGHANSGARPLNGQWP) are disordered.

The protein belongs to the CofC family.

The catalysed reaction is phosphoenolpyruvate + GTP + H(+) = enolpyruvoyl-2-diphospho-5'-guanosine + diphosphate. The protein operates within cofactor biosynthesis; coenzyme F420 biosynthesis. Functionally, guanylyltransferase that catalyzes the activation of phosphoenolpyruvate (PEP) as enolpyruvoyl-2-diphospho-5'-guanosine, via the condensation of PEP with GTP. It is involved in the biosynthesis of coenzyme F420, a hydride carrier cofactor. This Rhodococcus erythropolis (strain PR4 / NBRC 100887) protein is Phosphoenolpyruvate guanylyltransferase.